A 391-amino-acid polypeptide reads, in one-letter code: 1-deoxy-D-xylulose 5-phosphate reductoisomerase (391 aa).

Residues Thr-17, Gly-18, Ser-19, Ile-20, Asn-47, and Asn-130 each coordinate NADPH. Lys-131 is a 1-deoxy-D-xylulose 5-phosphate binding site. An NADPH-binding site is contributed by Glu-132. Residue Asp-156 participates in Mn(2+) binding. 1-deoxy-D-xylulose 5-phosphate-binding residues include Ser-157, Glu-158, Ser-182, and His-205. A Mn(2+)-binding site is contributed by Glu-158. Gly-211 provides a ligand contact to NADPH. 4 residues coordinate 1-deoxy-D-xylulose 5-phosphate: Ser-218, Asn-223, Lys-224, and Glu-227. Glu-227 provides a ligand contact to Mn(2+).

Belongs to the DXR family. Requires Mg(2+) as cofactor. The cofactor is Mn(2+).

It catalyses the reaction 2-C-methyl-D-erythritol 4-phosphate + NADP(+) = 1-deoxy-D-xylulose 5-phosphate + NADPH + H(+). Its pathway is isoprenoid biosynthesis; isopentenyl diphosphate biosynthesis via DXP pathway; isopentenyl diphosphate from 1-deoxy-D-xylulose 5-phosphate: step 1/6. In terms of biological role, catalyzes the NADPH-dependent rearrangement and reduction of 1-deoxy-D-xylulose-5-phosphate (DXP) to 2-C-methyl-D-erythritol 4-phosphate (MEP). This chain is 1-deoxy-D-xylulose 5-phosphate reductoisomerase, found in Sinorhizobium fredii (strain NBRC 101917 / NGR234).